Consider the following 107-residue polypeptide: UPF0145 protein YbjQ (107 aa).

Belongs to the UPF0145 family.

In Escherichia coli (strain SMS-3-5 / SECEC), this protein is UPF0145 protein YbjQ.